The following is a 134-amino-acid chain: Small ribosomal subunit protein uS8c (134 aa).

Belongs to the universal ribosomal protein uS8 family. Part of the 30S ribosomal subunit.

The protein resides in the plastid. The protein localises to the chloroplast. Functionally, one of the primary rRNA binding proteins, it binds directly to 16S rRNA central domain where it helps coordinate assembly of the platform of the 30S subunit. This Eucalyptus globulus subsp. globulus (Tasmanian blue gum) protein is Small ribosomal subunit protein uS8c (rps8).